Here is a 261-residue protein sequence, read N- to C-terminus: Prostate-specific antigen (261 aa).

An N-terminal signal peptide occupies residues 1 to 17 (MWVPVVFLTLSVTWIGA). A propeptide spans 18-24 (APLILSR) (activation peptide). Residues 25–258 (IVGGWECEKH…YRKWIKDTIV (234 aa)) form the Peptidase S1 domain. Intrachain disulfides connect Cys-31-Cys-173, Cys-50-Cys-66, Cys-152-Cys-219, Cys-184-Cys-198, and Cys-209-Cys-234. His-65 (charge relay system) is an active-site residue. Residue Asn-69 is glycosylated (N-linked (GlcNAc...) asparagine). The active-site Charge relay system is Asp-120. The Charge relay system role is filled by Ser-213.

The protein belongs to the peptidase S1 family. Kallikrein subfamily. Forms a heterodimer with SERPINA5.

It localises to the secreted. It carries out the reaction Preferential cleavage: -Tyr-|-Xaa-.. With respect to regulation, inhibited by SERPINA5. Activity is strongly inhibited by Zn2+, 100 times more abundant in semen than in serum. This inhibition is relieved by exposure to semenogelins, which are avid zinc binders. In terms of biological role, hydrolyzes semenogelin-1 thus leading to the liquefaction of the seminal coagulum. This chain is Prostate-specific antigen (KLK3), found in Homo sapiens (Human).